We begin with the raw amino-acid sequence, 321 residues long: Probable pectate lyase A (321 aa).

An N-terminal signal peptide occupies residues 1–18 (MKFVATLIACGLSGLALA). N-linked (GlcNAc...) asparagine glycosylation occurs at Asn-93. Positions 134, 163, and 167 each coordinate Ca(2+). Arg-220 is a catalytic residue. The N-linked (GlcNAc...) asparagine glycan is linked to Asn-238.

It belongs to the polysaccharide lyase 1 family. Requires Ca(2+) as cofactor.

It localises to the secreted. It carries out the reaction Eliminative cleavage of (1-&gt;4)-alpha-D-galacturonan to give oligosaccharides with 4-deoxy-alpha-D-galact-4-enuronosyl groups at their non-reducing ends.. Pectinolytic enzyme consist of four classes of enzymes: pectin lyase, polygalacturonase, pectin methylesterase and rhamnogalacturonase. Among pectinolytic enzymes, pectin lyase is the most important in depolymerization of pectin, since it cleaves internal glycosidic bonds of highly methylated pectins. Favors pectate, the anion, over pectin, the methyl ester. This chain is Probable pectate lyase A (plyA), found in Neosartorya fischeri (strain ATCC 1020 / DSM 3700 / CBS 544.65 / FGSC A1164 / JCM 1740 / NRRL 181 / WB 181) (Aspergillus fischerianus).